We begin with the raw amino-acid sequence, 432 residues long: Adenylosuccinate synthetase (432 aa).

GTP contacts are provided by residues 13–19 (GDEGKGK) and 41–43 (GHT). Asp14 functions as the Proton acceptor in the catalytic mechanism. The Mg(2+) site is built by Asp14 and Gly41. IMP is bound by residues 14–17 (DEGK), 39–42 (NAGH), Thr130, Arg144, Gln225, Thr240, and Arg304. His42 serves as the catalytic Proton donor. 300–306 (ATTGRRR) serves as a coordination point for substrate. GTP is bound by residues Arg306, 332–334 (KLD), and 415–417 (STG).

Belongs to the adenylosuccinate synthetase family. As to quaternary structure, homodimer. Mg(2+) serves as cofactor.

Its subcellular location is the cytoplasm. It carries out the reaction IMP + L-aspartate + GTP = N(6)-(1,2-dicarboxyethyl)-AMP + GDP + phosphate + 2 H(+). It participates in purine metabolism; AMP biosynthesis via de novo pathway; AMP from IMP: step 1/2. Functionally, plays an important role in the de novo pathway of purine nucleotide biosynthesis. Catalyzes the first committed step in the biosynthesis of AMP from IMP. The polypeptide is Adenylosuccinate synthetase (Salmonella paratyphi A (strain AKU_12601)).